The chain runs to 104 residues: Increased recombination centers protein 13 (104 aa).

A helical transmembrane segment spans residues 63–83 (LVHLFSYVFFLFLLKICVDVL).

The protein localises to the membrane. May be involved in a pathway contributing to genomic integrity. This is Increased recombination centers protein 13 (IRC13) from Saccharomyces cerevisiae (strain ATCC 204508 / S288c) (Baker's yeast).